The primary structure comprises 190 residues: Zinc metalloproteinase/disintegrin (190 aa).

The 11-residue stretch at 1–11 folds into the Peptidase M12B domain; it reads NHNPECIVNEP. One can recognise a Disintegrin domain in the interval 19-105; it reads PPVCGNELLE…ECPADVFHKN (87 aa). Ca(2+) contacts are provided by Val-21, Asn-24, Leu-26, Glu-28, Glu-31, and Asp-34. 6 disulfides stabilise this stretch: Cys-33–Cys-51, Cys-35–Cys-46, Cys-45–Cys-68, Cys-59–Cys-65, Cys-64–Cys-90, and Cys-77–Cys-97. The short motif at 83–85 is the D/ECD-tripeptide element; the sequence is ECD. Ca(2+)-binding residues include Asp-85, Pro-86, Glu-88, Asp-100, and Val-101. Residues 104-190 constitute a propeptide that is removed on maturation; that stretch reads KNGQPCLDNY…DNSPGQNGPC (87 aa).

It belongs to the venom metalloproteinase (M12B) family. P-III subfamily. In terms of assembly, monomer. Zn(2+) serves as cofactor. In terms of tissue distribution, expressed by the venom gland.

Its subcellular location is the secreted. Its function is as follows. Impairs hemostasis in the envenomed animal. Functionally, inhibits platelet aggregation induced by ADP, thrombin, platelet-activating factor and collagen. Acts by inhibiting fibrinogen interaction with platelet receptors GPIIb/GPIIIa (ITGA2B/ITGB3). In Gloydius brevicauda (Korean slamosa snake), this protein is Zinc metalloproteinase/disintegrin.